The chain runs to 345 residues: Phosphoribosylformylglycinamidine cyclo-ligase (345 aa).

It belongs to the AIR synthase family.

It localises to the cytoplasm. It catalyses the reaction 2-formamido-N(1)-(5-O-phospho-beta-D-ribosyl)acetamidine + ATP = 5-amino-1-(5-phospho-beta-D-ribosyl)imidazole + ADP + phosphate + H(+). Its pathway is purine metabolism; IMP biosynthesis via de novo pathway; 5-amino-1-(5-phospho-D-ribosyl)imidazole from N(2)-formyl-N(1)-(5-phospho-D-ribosyl)glycinamide: step 2/2. This chain is Phosphoribosylformylglycinamidine cyclo-ligase, found in Shewanella loihica (strain ATCC BAA-1088 / PV-4).